The sequence spans 161 residues: Cyclic pyranopterin monophosphate synthase (161 aa).

Residues 73–75 and 110–111 each bind substrate; these read LCH and ME. The active site involves Asp125.

It belongs to the MoaC family. In terms of assembly, homohexamer; trimer of dimers.

It catalyses the reaction (8S)-3',8-cyclo-7,8-dihydroguanosine 5'-triphosphate = cyclic pyranopterin phosphate + diphosphate. It participates in cofactor biosynthesis; molybdopterin biosynthesis. Functionally, catalyzes the conversion of (8S)-3',8-cyclo-7,8-dihydroguanosine 5'-triphosphate to cyclic pyranopterin monophosphate (cPMP). The sequence is that of Cyclic pyranopterin monophosphate synthase from Pseudomonas syringae pv. tomato (strain ATCC BAA-871 / DC3000).